The following is a 657-amino-acid chain: MFLTSILYTIIIILIFYKGLEYLIEKRSFPLVHPIKGVMNGTKPYFIFGDLPFQRLLNLKPKLKELGSIYFRWFFWYPIVEIKDINAIQYVYNEKSNNYSLYWNLNKSSNFILTGSEIKRFFRIYYCAFNCKDSLQRIMPVIKSQVFDFIHSHKFQNSTLSTNDDVTNFMLKLLSRVYLGSSDEAYHCFKANYKKFNKSYLDFFHYLFPTLLKIPSKFSRKYIKNKNKRALYQVLAMKAYYGVVKQSSDDHIEESMINIIAETSYNDKEGLSLEEIKMPSYLLNASSIKGPMIMVENLMFQLIEKSEIESKIRKEIKLVFEKNGKDVNSFDFDDIMEMKYLEATLDEINRLYPPFPKLMPRQTKESDRILGYHIPKGTMISCPVADILRDPSNFQDPLTFKPERQLIFSNPKFASPSITSIQEINGLSSSSSNSFALHHRSLPSINNNNNNNNNNNNNNNNNNNNNNNNNSNNNSINGNNKNNNRNCIQSFNNSALKKSFLSDSSSIIDNIVGTNRVDKLKLDSLNENSNINNNNNKDLLNVPNIIEINKNNPISNNKYNSYNNLTIEERNQRIIKNLPWGIGSKKCLGKELAKLIVKTIIVILYSQYTFDKHLDENDEELCDTNNQPKIQITFNPEIKPPLLLKSRKLFSISQPKQ.

The chain crosses the membrane as a helical span at residues 2–24; sequence FLTSILYTIIIILIFYKGLEYLI. Residues 440–486 form a disordered region; it reads RSLPSINNNNNNNNNNNNNNNNNNNNNNNNNSNNNSINGNNKNNNRN. Over residues 446–486 the composition is skewed to low complexity; the sequence is NNNNNNNNNNNNNNNNNNNNNNNNNSNNNSINGNNKNNNRN. Position 587 (Cys587) interacts with heme.

This sequence belongs to the cytochrome P450 family. Heme is required as a cofactor.

The protein localises to the membrane. The chain is Probable cytochrome P450 556A1 (cyp556A1) from Dictyostelium discoideum (Social amoeba).